The sequence spans 118 residues: Protein Rev (118 aa).

2 positions are modified to phosphoserine; by host CK2: Ser-5 and Ser-8. Positions 18-26 are homomultimerization; the sequence is LIKFLYQSN. The tract at residues 23-46 is disordered; it reads YQSNPPPSPEGTRQARRNRRRRWR. Positions 34–50 match the Nuclear localization signal and RNA-binding (RRE) motif; that stretch reads TRQARRNRRRRWRARQR. The span at 36–46 shows a compositional bias: basic residues; it reads QARRNRRRRWR. A Nuclear export signal and binding to XPO1 motif is present at residues 73 to 84; the sequence is LQLPPLERLNLN. The interval 87–118 is disordered; sequence EDCRTSGTQGVGHPQISVESPTVLESGTEEQC. Ser-92 is modified (phosphoserine; by host). The segment covering 103–112 has biased composition (polar residues); sequence SVESPTVLES.

It belongs to the HIV-1 REV protein family. In terms of assembly, homomultimer; when bound to the RRE. Multimeric assembly is essential for activity and may involve XPO1. Binds to human KPNB1, XPO1, TNPO1, RANBP5 and IPO7. Interacts with the viral Integrase. Interacts with human KHDRBS1. Interacts with human NAP1; this interaction decreases Rev multimerization and stimulates its activity. Interacts with human DEAD-box helicases DDX3 and DDX24; these interactions may serve for viral RNA export to the cytoplasm and packaging, respectively. Interacts with human PSIP1; this interaction may inhibit HIV-1 DNA integration by promoting dissociation of the Integrase-LEDGF/p75 complex. Post-translationally, asymmetrically arginine dimethylated at one site by host PRMT6. Methylation impairs the RNA-binding activity and export of viral RNA from the nucleus to the cytoplasm. In terms of processing, phosphorylated by protein kinase CK2. Presence of, and maybe binding to the N-terminus of the regulatory beta subunit of CK2 is necessary for CK2-mediated Rev's phosphorylation.

Its subcellular location is the host nucleus. The protein localises to the host nucleolus. It localises to the host cytoplasm. Escorts unspliced or incompletely spliced viral pre-mRNAs (late transcripts) out of the nucleus of infected cells. These pre-mRNAs carry a recognition sequence called Rev responsive element (RRE) located in the env gene, that is not present in fully spliced viral mRNAs (early transcripts). This function is essential since most viral proteins are translated from unspliced or partially spliced pre-mRNAs which cannot exit the nucleus by the pathway used by fully processed cellular mRNAs. Rev itself is translated from a fully spliced mRNA that readily exits the nucleus. Rev's nuclear localization signal (NLS) binds directly to KPNB1/Importin beta-1 without previous binding to KPNA1/Importin alpha-1. KPNB1 binds to the GDP bound form of RAN (Ran-GDP) and targets Rev to the nucleus. In the nucleus, the conversion from Ran-GDP to Ran-GTP dissociates Rev from KPNB1 and allows Rev's binding to the RRE in viral pre-mRNAs. Rev multimerization on the RRE via cooperative assembly exposes its nuclear export signal (NES) to the surface. Rev can then form a complex with XPO1/CRM1 and Ran-GTP, leading to nuclear export of the complex. Conversion from Ran-GTP to Ran-GDP mediates dissociation of the Rev/RRE/XPO1/RAN complex, so that Rev can return to the nucleus for a subsequent round of export. Beside KPNB1, also seems to interact with TNPO1/Transportin-1, RANBP5/IPO5 and IPO7/RANBP7 for nuclear import. The nucleoporin-like HRB/RIP is an essential cofactor that probably indirectly interacts with Rev to release HIV RNAs from the perinuclear region to the cytoplasm. This is Protein Rev from Human immunodeficiency virus type 1 group M subtype D (isolate ELI) (HIV-1).